We begin with the raw amino-acid sequence, 187 residues long: CASP-like protein 2C1 (187 aa).

At 1-14 (MVAAARVVSGVKAE) the chain is on the cytoplasmic side. The helical transmembrane segment at 15–35 (GLLRGACAALAAAAALLLGLS) threads the bilayer. Over 36 to 54 (TQTETVLLVRKKGTVKDVQ) the chain is Extracellular. A helical transmembrane segment spans residues 55 to 75 (ALWVLAMAAASAAGYHLLQLL). Topologically, residues 76 to 97 (KCLYLGRGGGRALAWTCLLLDK) are cytoplasmic. Residues 98–118 (ACAYATFATTVAAAQACVVAL) form a helical membrane-spanning segment. The Extracellular portion of the chain corresponds to 119–139 (DGAHALQWTKLCNIYTRFCEQ). Residues 140 to 160 (VAGSLVLGMLAAVGTAVLSAA) form a helical membrane-spanning segment. Residues 161-187 (SARNVFRHYYCSSHSPPAPPPETCDAH) lie on the Cytoplasmic side of the membrane.

It belongs to the Casparian strip membrane proteins (CASP) family. In terms of assembly, homodimer and heterodimers.

It is found in the cell membrane. The polypeptide is CASP-like protein 2C1 (Zea mays (Maize)).